Here is a 1405-residue protein sequence, read N- to C-terminus: DNA-directed RNA polymerase subunit beta' (1405 aa).

4 residues coordinate Zn(2+): cysteine 70, cysteine 72, cysteine 85, and cysteine 88. Residues aspartate 460, aspartate 462, and aspartate 464 each contribute to the Mg(2+) site. Positions 814, 888, 895, and 898 each coordinate Zn(2+).

Belongs to the RNA polymerase beta' chain family. The RNAP catalytic core consists of 2 alpha, 1 beta, 1 beta' and 1 omega subunit. When a sigma factor is associated with the core the holoenzyme is formed, which can initiate transcription. Requires Mg(2+) as cofactor. Zn(2+) serves as cofactor.

It carries out the reaction RNA(n) + a ribonucleoside 5'-triphosphate = RNA(n+1) + diphosphate. DNA-dependent RNA polymerase catalyzes the transcription of DNA into RNA using the four ribonucleoside triphosphates as substrates. The chain is DNA-directed RNA polymerase subunit beta' from Shewanella sp. (strain ANA-3).